We begin with the raw amino-acid sequence, 782 residues long: Zinc finger protein 786 (782 aa).

The KRAB domain occupies 9–80 (LTFEDVAIYF…WRESQKSGNI (72 aa)). Residues 141-164 (PQRHDARAPPPLACGPSESTLKEG) are disordered. The C2H2-type 1; degenerate zinc-finger motif lies at 192–209 (CGESCWENNHLVMHQRGH). The segment at 240 to 262 (FRCGVCGKSFRRKLCLLRHLAAH) adopts a C2H2-type 2 zinc-finger fold. The tract at residues 285-364 (SHRLPQQGEK…EGDTEALQHG (80 aa)) is disordered. Residues 369–391 (CSCSECGERSPMSARLASPCRAH) form a C2H2-type 3; degenerate zinc finger. 3 consecutive C2H2-type zinc fingers follow at residues 397–419 (FQCA…QHAH), 425–447 (FSCR…IRVH), and 453–475 (FRCA…QRLH). The C2H2-type 7; degenerate zinc finger occupies 481-503 (FQCPECGLSFRLESMLRAHRLRH). 9 C2H2-type zinc fingers span residues 509–531 (FSCS…LRVH), 537–559 (FQCL…QHTH), 565–587 (FSCG…LRVH), 593–615 (FQCP…QRLH), 621–643 (FQCP…QLLH), 649–670 (FSCE…IRTH), 676–698 (FQCP…QGLH), 704–726 (FHCP…QRIH), and 732–754 (FACG…IRVH).

The protein belongs to the krueppel C2H2-type zinc-finger protein family.

It is found in the nucleus. In terms of biological role, may be involved in transcriptional regulation. This Homo sapiens (Human) protein is Zinc finger protein 786 (ZNF786).